The sequence spans 187 residues: dCTP deaminase (187 aa).

Residues 110–115 (KSTYAR), 134–136 (TLE), Gln155, Tyr169, and Gln179 contribute to the dCTP site. Residue Glu136 is the Proton donor/acceptor of the active site.

It belongs to the dCTP deaminase family. In terms of assembly, homotrimer.

The enzyme catalyses dCTP + H2O + H(+) = dUTP + NH4(+). It functions in the pathway pyrimidine metabolism; dUMP biosynthesis; dUMP from dCTP (dUTP route): step 1/2. Catalyzes the deamination of dCTP to dUTP. The chain is dCTP deaminase from Bordetella bronchiseptica (strain ATCC BAA-588 / NCTC 13252 / RB50) (Alcaligenes bronchisepticus).